Consider the following 511-residue polypeptide: MLDDLPEQFDLVVIGTGFTESCIAAAGSRIGKSVLHLDSNEYYGDVWSSFSMDALCARLDQEVEPHSALRNARYTWHSMEKESETDAQSWNRDSVLAKSRRFSLDLCPRILYAAGELVQLLIKSNICRYAEFRAVDHVCMRHNGEIVSVPCSRSDVFNTKTLTIVEKRLLMKFLTACNDYGEDKCNEDSLEFRGRTFLEYLQAQRVTEKISSCVMQAIAMCGPSTSFEEGMQRTQRFLGSLGRYGNTPFLFPMYGCGELPQCFCRLCAVYGGIYCLKRAVDDIALDSNSNEFLLSSAGKTLRAKNVVSAPGYTPVSKGIELKPHISRGLFISSSPLGNEELNKGGGGVNLLRLLDNEGGREAFLIQLSHYTGACPEGLYIFHLTTPALSEDPASDLAIFTSQLFDQSDAQIIFSSYFTIAAQSSKSPAAEHIYYTDPPTYELDYDAAIANARDIFGKMFPDADFLPRAPDPEEIVVDGEDPSALNEHTLPEDLRAQLHDMQQATQEMDIQE.

Belongs to the Rab GDI family.

The protein resides in the cytoplasm. Its subcellular location is the perinuclear region. The protein localises to the cytoskeleton. It is found in the spindle pole. Functionally, binds unprenylated Rab proteins, presents it to the catalytic component B, and remains bound to it after the geranylgeranyl transfer reaction. The component A is thought to be regenerated by transferring its prenylated Rab to a protein acceptor. The chain is Rab proteins geranylgeranyltransferase component A from Drosophila melanogaster (Fruit fly).